A 119-amino-acid polypeptide reads, in one-letter code: Large ribosomal subunit protein bL20 (119 aa).

This sequence belongs to the bacterial ribosomal protein bL20 family.

Binds directly to 23S ribosomal RNA and is necessary for the in vitro assembly process of the 50S ribosomal subunit. It is not involved in the protein synthesizing functions of that subunit. In Alcanivorax borkumensis (strain ATCC 700651 / DSM 11573 / NCIMB 13689 / SK2), this protein is Large ribosomal subunit protein bL20.